Here is a 538-residue protein sequence, read N- to C-terminus: Xylosidase/arabinosidase 43B (538 aa).

Catalysis depends on E367, which acts as the Proton donor.

This sequence belongs to the glycosyl hydrolase 43 family.

It catalyses the reaction Hydrolysis of (1-&gt;4)-beta-D-xylans, to remove successive D-xylose residues from the non-reducing termini.. It carries out the reaction Hydrolysis of terminal non-reducing alpha-L-arabinofuranoside residues in alpha-L-arabinosides.. Activity is inhibited by Ag(+), Li(+), Cu(2+), Cr(3+), Co(3+), Ni(2+), Mg(2+), Zn(2+), EDTA, SDS and beta-mercaptoethanol; but not by Mn(2+), Pb(2+), Ca(2+) and Fe(3+). Functionally, bifunctional beta-xylosidase/alpha-L-arabinosidases with a low level of xylanase activity. Is most active on 4-nitrophenyl beta-D-xylopyranoside (pNPX) (defined as 100%), moderate on p-nitrophenyl-alpha-L-arabinofuranoside (pNPA) (56.6%), and weak on beechwood xylan (5.7%) and birchwood xylan (2.7%). Is able to attack xylooligosacchardies with degrees of polymerisation of 2-5, releasing the amounts of reducing sugars in the order of xylopentose &gt; xylotetraose &gt; xylotriose &gt; xylobiose, i.e. the rate of xylose released from xylooligosacchardies increased with the chain length. No activity was detected in the presence of carboxymethyl cellulose-sodium (CMC-Na), sugar beet arabinan, AZCL-arabinan (debranched), 4-nitrophenyl a-D - galactopyranoside, 2-nitrophenyl beta-D-galactopyranoside, and 4-nitrophenyl alpha-D-glucopyranoside. This Humicola insolens (Soft-rot fungus) protein is Xylosidase/arabinosidase 43B.